The following is a 425-amino-acid chain: Rho GTPase-activating protein 8 (425 aa).

A CRAL-TRIO domain is found at 13-168; that stretch reads PFYDVARHGI…EVVRYDEKLQ (156 aa). The segment at 169–192 is disordered; the sequence is NLHKGQPPPPTKTPPPRPPLPTQQ. Residues 174-189 show a composition bias toward pro residues; the sequence is QPPPPTKTPPPRPPLP. The Rho-GAP domain occupies 195 to 381; sequence VSLQYLRDKN…LLIEYYDKVF (187 aa).

As to expression, highly expressed in skeletal muscle, lung and testis, and at lower levels in kidney, stomach and colon. Not detected in heart, liver, spleen, breast, brain, neonatal head or pancreas.

Functionally, GTPase activator for the Rho-type GTPases by converting them to an inactive GDP-bound state. This Mus musculus (Mouse) protein is Rho GTPase-activating protein 8 (Arhgap8).